The primary structure comprises 473 residues: Notchless protein homolog (473 aa).

A ubiquitin-like (UBL) domain region spans residues 9-91 (GKTVMCLLTD…VLTIVYQQQA (83 aa)). 8 WD repeats span residues 107-146 (GHAE…PLFT), 149-188 (GHKN…LEGS), 192-236 (GHKK…SIIC), 239-277 (GHTL…LIRE), 313-354 (EKQK…QPKK), 358-399 (GHQQ…TVFR), 400-439 (GHVG…LKQD), and 442-473 (GHAD…LWKG). The short motif at 417 to 432 (LLSGSKDSTLKIWEIR) is the DWD box element.

Belongs to the NLE1/RSA4 family. In terms of assembly, associates with the pre-60S ribosomal particle. Constitutively and ubiquitously expressed.

The protein localises to the nucleus. It is found in the nucleolus. Required for female gametophyte development. The sequence is that of Notchless protein homolog from Arabidopsis thaliana (Mouse-ear cress).